The primary structure comprises 65 residues: Large ribosomal subunit protein uL30 (65 aa).

Belongs to the universal ribosomal protein uL30 family. As to quaternary structure, part of the 50S ribosomal subunit.

The chain is Large ribosomal subunit protein uL30 from Methylobacillus flagellatus (strain ATCC 51484 / DSM 6875 / VKM B-1610 / KT).